Consider the following 195-residue polypeptide: Dihydroneopterin triphosphate diphosphatase (195 aa).

Residue D73 is the Proton acceptor of the active site.

It belongs to the HAM1 NTPase family. The cofactor is Mn(2+).

The catalysed reaction is 7,8-dihydroneopterin 3'-triphosphate + H2O = 7,8-dihydroneopterin 3'-phosphate + diphosphate + H(+). The protein operates within cofactor biosynthesis; tetrahydrofolate biosynthesis. Pyrophosphatase involved in the biosynthesis of tetrahydrofolate. Catalyzes the hydrolysis of dihydroneopterin triphosphate (DHNTP) to dihydroneopterin monophosphate (DHNMP) and pyrophosphate. Shows a strict substrate specificity. Has only weak activity with GTP, ITP, XTP and dTTP, and cannot use ATP, UTP, CTP, NAD(+), NADH, diadenosine triphosphate, diadenosine tetraphosphate, ADP-ribose and UDP-glucose. The protein is Dihydroneopterin triphosphate diphosphatase of Limosilactobacillus reuteri (strain DSM 20016) (Lactobacillus reuteri).